Consider the following 831-residue polypeptide: Probable glucan 1,3-beta-glucosidase D (831 aa).

6 stretches are compositionally biased toward basic and acidic residues: residues 1–24, 44–56, 79–93, 102–115, 137–151, and 198–213; these read MPSH…YREV, RRDD…RSHE, RSHD…RSRA, SRRD…EYRR, RDGQ…DREA, and QRER…LESK. 2 disordered regions span residues 1-179 and 192-241; these read MPSH…SGSH and HYDE…GQSK. Over 1 to 297 the chain is Cytoplasmic; that stretch reads MPSHSRSRDR…AQPPFWKRKK (297 aa). Residues 298–318 form a helical; Signal-anchor for type II membrane protein membrane-spanning segment; sequence WWIVIGVLVVVLAIVIPVAVV. At 319–831 the chain is on the extracellular side; sequence MSKKHGHDDD…PSFGDLPEYY (513 aa). N-linked (GlcNAc...) asparagine glycosylation is found at N376, N381, N393, N410, N442, N546, and N558. E597 acts as the Proton donor in catalysis. N610, N636, N669, and N689 each carry an N-linked (GlcNAc...) asparagine glycan. E702 acts as the Nucleophile in catalysis.

This sequence belongs to the glycosyl hydrolase 5 (cellulase A) family.

The protein resides in the cell membrane. The enzyme catalyses Successive hydrolysis of beta-D-glucose units from the non-reducing ends of (1-&gt;3)-beta-D-glucans, releasing alpha-glucose.. In terms of biological role, glucosidase involved in the degradation of cellulosic biomass. Active on lichenan. This is Probable glucan 1,3-beta-glucosidase D (exgD) from Aspergillus flavus (strain ATCC 200026 / FGSC A1120 / IAM 13836 / NRRL 3357 / JCM 12722 / SRRC 167).